The following is a 239-amino-acid chain: 7-cyano-7-deazaguanine synthase (239 aa).

Residue 8 to 18 (FSGGLDSTACL) coordinates ATP. Positions 194, 209, 212, and 215 each coordinate Zn(2+).

This sequence belongs to the QueC family. It depends on Zn(2+) as a cofactor.

It carries out the reaction 7-carboxy-7-deazaguanine + NH4(+) + ATP = 7-cyano-7-deazaguanine + ADP + phosphate + H2O + H(+). The protein operates within purine metabolism; 7-cyano-7-deazaguanine biosynthesis. Catalyzes the ATP-dependent conversion of 7-carboxy-7-deazaguanine (CDG) to 7-cyano-7-deazaguanine (preQ(0)). This is 7-cyano-7-deazaguanine synthase from Pyrococcus horikoshii (strain ATCC 700860 / DSM 12428 / JCM 9974 / NBRC 100139 / OT-3).